Reading from the N-terminus, the 123-residue chain is WAP four-disulfide core domain protein 5 (123 aa).

A signal peptide spans 1-24 (MRIQSLLLLGALLAVGSQLPAVFG). WAP domains are found at residues 27–73 (KGEK…CVPR) and 74–121 (VSVK…RDPA). Intrachain disulfides connect cysteine 34–cysteine 62, cysteine 41–cysteine 66, cysteine 49–cysteine 61, cysteine 55–cysteine 70, cysteine 81–cysteine 109, cysteine 88–cysteine 113, cysteine 96–cysteine 108, and cysteine 102–cysteine 117.

The protein localises to the secreted. Putative acid-stable proteinase inhibitor. The polypeptide is WAP four-disulfide core domain protein 5 (WFDC5) (Pongo abelii (Sumatran orangutan)).